Here is a 427-residue protein sequence, read N- to C-terminus: Glutamate-1-semialdehyde 2,1-aminomutase (427 aa).

Position 265 is an N6-(pyridoxal phosphate)lysine (K265).

This sequence belongs to the class-III pyridoxal-phosphate-dependent aminotransferase family. HemL subfamily. In terms of assembly, homodimer. It depends on pyridoxal 5'-phosphate as a cofactor.

Its subcellular location is the cytoplasm. The enzyme catalyses (S)-4-amino-5-oxopentanoate = 5-aminolevulinate. The protein operates within porphyrin-containing compound metabolism; protoporphyrin-IX biosynthesis; 5-aminolevulinate from L-glutamyl-tRNA(Glu): step 2/2. The sequence is that of Glutamate-1-semialdehyde 2,1-aminomutase from Photorhabdus laumondii subsp. laumondii (strain DSM 15139 / CIP 105565 / TT01) (Photorhabdus luminescens subsp. laumondii).